The sequence spans 423 residues: Glutamate-1-semialdehyde 2,1-aminomutase (423 aa).

K266 is subject to N6-(pyridoxal phosphate)lysine.

The protein belongs to the class-III pyridoxal-phosphate-dependent aminotransferase family. HemL subfamily. Homodimer. Pyridoxal 5'-phosphate is required as a cofactor.

Its subcellular location is the cytoplasm. The enzyme catalyses (S)-4-amino-5-oxopentanoate = 5-aminolevulinate. The protein operates within porphyrin-containing compound metabolism; protoporphyrin-IX biosynthesis; 5-aminolevulinate from L-glutamyl-tRNA(Glu): step 2/2. This chain is Glutamate-1-semialdehyde 2,1-aminomutase, found in Nitratidesulfovibrio vulgaris (strain DP4) (Desulfovibrio vulgaris).